A 739-amino-acid chain; its full sequence is Ent-kaurene synthase-like 3 (739 aa).

Mg(2+) is bound by residues aspartate 475, aspartate 479, asparagine 619, threonine 623, and glutamate 627. The DDXXD motif signature appears at 475–479 (DDFFD).

This sequence belongs to the terpene synthase family. The cofactor is Mg(2+). Expressed in roots and stems.

This Oryza sativa subsp. japonica (Rice) protein is Ent-kaurene synthase-like 3 (KSL3).